Consider the following 76-residue polypeptide: ATP synthase subunit c (76 aa).

2 helical membrane-spanning segments follow: residues 12 to 32 and 54 to 74; these read LGSI…GIIF and ILGF…PFVY.

It belongs to the ATPase C chain family. As to quaternary structure, F-type ATPases have 2 components, F(1) - the catalytic core - and F(0) - the membrane proton channel. F(1) has five subunits: alpha(3), beta(3), gamma(1), delta(1), epsilon(1). F(0) has three main subunits: a(1), b(2) and c(10-14). The alpha and beta chains form an alternating ring which encloses part of the gamma chain. F(1) is attached to F(0) by a central stalk formed by the gamma and epsilon chains, while a peripheral stalk is formed by the delta and b chains.

Its subcellular location is the cell membrane. In terms of biological role, f(1)F(0) ATP synthase produces ATP from ADP in the presence of a proton or sodium gradient. F-type ATPases consist of two structural domains, F(1) containing the extramembraneous catalytic core and F(0) containing the membrane proton channel, linked together by a central stalk and a peripheral stalk. During catalysis, ATP synthesis in the catalytic domain of F(1) is coupled via a rotary mechanism of the central stalk subunits to proton translocation. Its function is as follows. Key component of the F(0) channel; it plays a direct role in translocation across the membrane. A homomeric c-ring of between 10-14 subunits forms the central stalk rotor element with the F(1) delta and epsilon subunits. The sequence is that of ATP synthase subunit c from Streptomyces coelicolor (strain ATCC BAA-471 / A3(2) / M145).